The following is a 384-amino-acid chain: PqqA peptide cyclase (384 aa).

The Radical SAM core domain maps to 15-231 (PGPPLWLLAE…NQWRDKLAAE (217 aa)). Positions 29, 33, and 36 each coordinate [4Fe-4S] cluster.

The protein belongs to the radical SAM superfamily. PqqE family. In terms of assembly, interacts with PqqD. The interaction is necessary for activity of PqqE. It depends on [4Fe-4S] cluster as a cofactor.

The enzyme catalyses [PQQ precursor protein] + S-adenosyl-L-methionine = E-Y cross-linked-[PQQ precursor protein] + 5'-deoxyadenosine + L-methionine + H(+). It participates in cofactor biosynthesis; pyrroloquinoline quinone biosynthesis. Functionally, catalyzes the cross-linking of a glutamate residue and a tyrosine residue in the PqqA protein as part of the biosynthesis of pyrroloquinoline quinone (PQQ). This chain is PqqA peptide cyclase, found in Ectopseudomonas mendocina (strain ymp) (Pseudomonas mendocina).